A 70-amino-acid chain; its full sequence is MQSVNEVAQQLFSKLREKKEITAEDIIAIYNVTPSVAYAIFTVLKVMCQQHQGECQAIKRGRKTVIVSKQ.

This is an uncharacterized protein from Acidianus convivator (ATV).